Consider the following 945-residue polypeptide: Isoleucine--tRNA ligase (945 aa).

The 'HIGH' region signature appears at 66–76; sequence PYANGDIHLGH. Glu581 lines the L-isoleucyl-5'-AMP pocket. Residues 622-626 carry the 'KMSKS' region motif; the sequence is KMSKS. Lys625 provides a ligand contact to ATP. Positions 908, 911, 928, and 931 each coordinate Zn(2+).

It belongs to the class-I aminoacyl-tRNA synthetase family. IleS type 1 subfamily. Monomer. Zn(2+) serves as cofactor.

The protein resides in the cytoplasm. It carries out the reaction tRNA(Ile) + L-isoleucine + ATP = L-isoleucyl-tRNA(Ile) + AMP + diphosphate. Functionally, catalyzes the attachment of isoleucine to tRNA(Ile). As IleRS can inadvertently accommodate and process structurally similar amino acids such as valine, to avoid such errors it has two additional distinct tRNA(Ile)-dependent editing activities. One activity is designated as 'pretransfer' editing and involves the hydrolysis of activated Val-AMP. The other activity is designated 'posttransfer' editing and involves deacylation of mischarged Val-tRNA(Ile). The sequence is that of Isoleucine--tRNA ligase from Burkholderia vietnamiensis (strain G4 / LMG 22486) (Burkholderia cepacia (strain R1808)).